Reading from the N-terminus, the 316-residue chain is Ornithine carbamoyltransferase (316 aa).

Carbamoyl phosphate contacts are provided by residues 57 to 60 (STRT), Gln84, Arg108, and 135 to 138 (HPCQ). L-ornithine contacts are provided by residues Asn166, Asp230, and 234–235 (SM). Carbamoyl phosphate contacts are provided by residues 269 to 270 (CL) and Arg297.

This sequence belongs to the aspartate/ornithine carbamoyltransferase superfamily. OTCase family.

Its subcellular location is the cytoplasm. The catalysed reaction is carbamoyl phosphate + L-ornithine = L-citrulline + phosphate + H(+). The protein operates within amino-acid biosynthesis; L-arginine biosynthesis; L-arginine from L-ornithine and carbamoyl phosphate: step 1/3. Reversibly catalyzes the transfer of the carbamoyl group from carbamoyl phosphate (CP) to the N(epsilon) atom of ornithine (ORN) to produce L-citrulline. The chain is Ornithine carbamoyltransferase from Bacillus thuringiensis subsp. konkukian (strain 97-27).